Reading from the N-terminus, the 220-residue chain is Ribose-5-phosphate isomerase A (220 aa).

Substrate is bound by residues 28–31, 81–84, and 94–97; these read TGST, DGAD, and KGGG. Glu-103 serves as the catalytic Proton acceptor. Lys-121 provides a ligand contact to substrate.

The protein belongs to the ribose 5-phosphate isomerase family. In terms of assembly, homodimer.

The enzyme catalyses aldehydo-D-ribose 5-phosphate = D-ribulose 5-phosphate. Its pathway is carbohydrate degradation; pentose phosphate pathway; D-ribose 5-phosphate from D-ribulose 5-phosphate (non-oxidative stage): step 1/1. Functionally, catalyzes the reversible conversion of ribose-5-phosphate to ribulose 5-phosphate. The chain is Ribose-5-phosphate isomerase A from Shewanella baltica (strain OS185).